Consider the following 326-residue polypeptide: Vitamin B12 import system permease protein BtuC (326 aa).

9 helical membrane-spanning segments follow: residues 15–35 (WLLC…CAGE), 61–81 (LAVL…QALF), 88–108 (PGLL…VLLG), 112–132 (LPNW…TLIL), 146–166 (LLAG…AIYF), 184–204 (GGVD…LLWI), 240–260 (GWMV…GLVI), 274–294 (VLLP…DVVA), and 302–322 (ELPI…WLLL).

This sequence belongs to the binding-protein-dependent transport system permease family. FecCD subfamily. The complex is composed of two ATP-binding proteins (BtuD), two transmembrane proteins (BtuC) and a solute-binding protein (BtuF).

It is found in the cell inner membrane. Its function is as follows. Part of the ABC transporter complex BtuCDF involved in vitamin B12 import. Involved in the translocation of the substrate across the membrane. The protein is Vitamin B12 import system permease protein BtuC of Escherichia coli O17:K52:H18 (strain UMN026 / ExPEC).